The following is a 245-amino-acid chain: Photosystem II protein PSBS2 (245 aa).

The transit peptide at 1–25 (MAMTLSTKAFAQRGVSARKNTVRVY) directs the protein to the chloroplast. 4 helical membrane passes run 72 to 92 (LFVGRLAMVGFSASLIGEILT), 108 to 128 (GIEVDGLVIGLIAFNLIAAVL), 185 to 205 (LGFAFSLIGEAVTGKGALAQF), and 217 to 237 (EFGLVVFILFLLFAAINEGSG).

Belongs to the ELIP/psbS family.

The protein resides in the plastid. The protein localises to the chloroplast thylakoid membrane. Required for non-photochemical quenching (NPQ), a mechanism that converts and dissipates the harmful excess absorbed light energy into heat and protect the photosynthetic apparatus from photo-oxidative damage. Seems involved in the activation of NPQ, possibly by promoting conformational changes required for activation of LHCSR3-dependent quenching in the antenna of photosystem II (PSII). The chain is Photosystem II protein PSBS2 from Chlamydomonas reinhardtii (Chlamydomonas smithii).